We begin with the raw amino-acid sequence, 159 residues long: Aphid transmission protein (159 aa).

This sequence belongs to the caulimoviridae ORF II family.

Functionally, this protein is involved in virus transmission. This is Aphid transmission protein from Cauliflower mosaic virus (strain BBC) (CaMV).